A 252-amino-acid chain; its full sequence is Serine/threonine phosphatase stp (252 aa).

The segment covering 1-18 (MHAEFRTDRGRIRHHNED) has biased composition (basic and acidic residues). The segment at 1–23 (MHAEFRTDRGRIRHHNEDNGGVF) is disordered. The PPM-type phosphatase domain maps to 2–242 (HAEFRTDRGR…DNITVLLVER (241 aa)). The Mn(2+) site is built by Asp36, Gly37, Asp194, and Asp233.

This sequence belongs to the PP2C family. Requires Mn(2+) as cofactor.

Its subcellular location is the cytoplasm. It localises to the membrane. It carries out the reaction O-phospho-L-seryl-[protein] + H2O = L-seryl-[protein] + phosphate. The catalysed reaction is O-phospho-L-threonyl-[protein] + H2O = L-threonyl-[protein] + phosphate. Its activity is regulated as follows. Activity not affected by inhibitors of phosphatases of the PPP family such as okadaic acid and cypermethrin, or by inhibitors of phosphatases of the PTP family such as sodium orthovanadate. Functionally, protein phosphatase that dephosphorylates EF-Tu. The sequence is that of Serine/threonine phosphatase stp (stp) from Listeria monocytogenes serovar 1/2a (strain ATCC BAA-679 / EGD-e).